Consider the following 56-residue polypeptide: UPF0291 protein Clos_1191 (56 aa).

Belongs to the UPF0291 family.

It localises to the cytoplasm. The polypeptide is UPF0291 protein Clos_1191 (Alkaliphilus oremlandii (strain OhILAs) (Clostridium oremlandii (strain OhILAs))).